The primary structure comprises 325 residues: DNA-directed RNA polymerase subunit alpha (325 aa).

The segment at Met-1–Glu-231 is alpha N-terminal domain (alpha-NTD). The interval Val-246–Lys-325 is alpha C-terminal domain (alpha-CTD).

Belongs to the RNA polymerase alpha chain family. As to quaternary structure, homodimer. The RNAP catalytic core consists of 2 alpha, 1 beta, 1 beta' and 1 omega subunit. When a sigma factor is associated with the core the holoenzyme is formed, which can initiate transcription.

The catalysed reaction is RNA(n) + a ribonucleoside 5'-triphosphate = RNA(n+1) + diphosphate. In terms of biological role, DNA-dependent RNA polymerase catalyzes the transcription of DNA into RNA using the four ribonucleoside triphosphates as substrates. The polypeptide is DNA-directed RNA polymerase subunit alpha (Janthinobacterium sp. (strain Marseille) (Minibacterium massiliensis)).